A 145-amino-acid polypeptide reads, in one-letter code: Large ribosomal subunit protein uL11 (145 aa).

Belongs to the universal ribosomal protein uL11 family. Part of the ribosomal stalk of the 50S ribosomal subunit. Interacts with L10 and the large rRNA to form the base of the stalk. L10 forms an elongated spine to which L12 dimers bind in a sequential fashion forming a multimeric L10(L12)X complex. In terms of processing, one or more lysine residues are methylated.

Functionally, forms part of the ribosomal stalk which helps the ribosome interact with GTP-bound translation factors. The chain is Large ribosomal subunit protein uL11 from Sulfurihydrogenibium sp. (strain YO3AOP1).